Here is a 179-residue protein sequence, read N- to C-terminus: Large ribosomal subunit protein uL5 (179 aa).

Belongs to the universal ribosomal protein uL5 family. As to quaternary structure, part of the 50S ribosomal subunit; part of the 5S rRNA/L5/L18/L25 subcomplex. Contacts the 5S rRNA and the P site tRNA. Forms a bridge to the 30S subunit in the 70S ribosome.

Functionally, this is one of the proteins that bind and probably mediate the attachment of the 5S RNA into the large ribosomal subunit, where it forms part of the central protuberance. In the 70S ribosome it contacts protein S13 of the 30S subunit (bridge B1b), connecting the 2 subunits; this bridge is implicated in subunit movement. Contacts the P site tRNA; the 5S rRNA and some of its associated proteins might help stabilize positioning of ribosome-bound tRNAs. In Vibrio cholerae serotype O1 (strain ATCC 39541 / Classical Ogawa 395 / O395), this protein is Large ribosomal subunit protein uL5.